The following is a 652-amino-acid chain: Proline-rich receptor-like protein kinase PERK1 (652 aa).

The tract at residues 1–137 is disordered; that stretch reads MSTAPSPGTT…PPSDSSDGLS (137 aa). The Extracellular segment spans residues 1-139; the sequence is MSTAPSPGTT…SDSSDGLSTG (139 aa). Residues 8–19 show a composition bias toward pro residues; the sequence is GTTPSPSPPSPP. N-linked (GlcNAc...) asparagine glycans are attached at residues Asn-21 and Asn-50. Over residues 26–112 the composition is skewed to pro residues; that stretch reads TPPPAASSPP…PSPNQGPPNT (87 aa). A compositionally biased stretch (low complexity) spans 113 to 137; sequence PSGSTPRTPSNTKPSPPSDSSDGLS. A helical transmembrane segment spans residues 140–160; that stretch reads VVVGIAIGGVAILVILTLICL. Residues 161–652 are Cytoplasmic-facing; the sequence is LCKKKRRRRH…TGQGYSGPSL (492 aa). The disordered stretch occupies residues 169-251; sequence RHDDEAAYYV…GGSDYSDLPV (83 aa). A compositionally biased stretch (polar residues) spans 203 to 213; the sequence is NASRPSDNHVV. The span at 216–236 shows a compositional bias: pro residues; that stretch reads LPPPKPPSPPRKPPPPPPPPA. Position 269 is a phosphothreonine (Thr-269). In terms of domain architecture, Protein kinase spans 280-559; sequence FSEANLLGQG…VRALEGNVSL (280 aa). ATP contacts are provided by residues 286-294 and Lys-308; that span reads LGQGGFGYV. Tyr-353 is subject to Phosphotyrosine. The Proton acceptor role is filled by Asp-404. Phosphoserine occurs at positions 408 and 437. Residues Thr-438 and Thr-443 each carry the phosphothreonine modification. A Phosphotyrosine modification is found at Tyr-451. A compositionally biased stretch (polar residues) spans 605-616; it reads YGTTGEYSNPTS. A disordered region spans residues 605-652; that stretch reads YGTTGEYSNPTSDYGLYPSGSSSEGQATREMEMGKIKKTGQGYSGPSL.

Belongs to the protein kinase superfamily. Ser/Thr protein kinase family. Mostly expressed in inflorescence bolt, flower buds and siliques, and, to a lower extent, in roots, seedlings and leaves.

The protein resides in the cell membrane. The enzyme catalyses L-seryl-[protein] + ATP = O-phospho-L-seryl-[protein] + ADP + H(+). It carries out the reaction L-threonyl-[protein] + ATP = O-phospho-L-threonyl-[protein] + ADP + H(+). The chain is Proline-rich receptor-like protein kinase PERK1 (PERK1) from Arabidopsis thaliana (Mouse-ear cress).